Here is a 94-residue protein sequence, read N- to C-terminus: Pyrimidine/purine nucleoside phosphorylase (94 aa).

This sequence belongs to the nucleoside phosphorylase PpnP family.

The catalysed reaction is a purine D-ribonucleoside + phosphate = a purine nucleobase + alpha-D-ribose 1-phosphate. It carries out the reaction adenosine + phosphate = alpha-D-ribose 1-phosphate + adenine. It catalyses the reaction cytidine + phosphate = cytosine + alpha-D-ribose 1-phosphate. The enzyme catalyses guanosine + phosphate = alpha-D-ribose 1-phosphate + guanine. The catalysed reaction is inosine + phosphate = alpha-D-ribose 1-phosphate + hypoxanthine. It carries out the reaction thymidine + phosphate = 2-deoxy-alpha-D-ribose 1-phosphate + thymine. It catalyses the reaction uridine + phosphate = alpha-D-ribose 1-phosphate + uracil. The enzyme catalyses xanthosine + phosphate = alpha-D-ribose 1-phosphate + xanthine. Functionally, catalyzes the phosphorolysis of diverse nucleosides, yielding D-ribose 1-phosphate and the respective free bases. Can use uridine, adenosine, guanosine, cytidine, thymidine, inosine and xanthosine as substrates. Also catalyzes the reverse reactions. In Vibrio campbellii (strain ATCC BAA-1116), this protein is Pyrimidine/purine nucleoside phosphorylase.